The primary structure comprises 636 residues: 1-deoxy-D-xylulose-5-phosphate synthase (636 aa).

Thiamine diphosphate is bound by residues His-75 and 116–118 (AHS). Asp-147 provides a ligand contact to Mg(2+). Thiamine diphosphate contacts are provided by residues 148 to 149 (GA), Asn-177, Tyr-288, and Glu-370. Asn-177 serves as a coordination point for Mg(2+).

Belongs to the transketolase family. DXPS subfamily. Homodimer. Mg(2+) serves as cofactor. The cofactor is thiamine diphosphate.

It catalyses the reaction D-glyceraldehyde 3-phosphate + pyruvate + H(+) = 1-deoxy-D-xylulose 5-phosphate + CO2. It functions in the pathway metabolic intermediate biosynthesis; 1-deoxy-D-xylulose 5-phosphate biosynthesis; 1-deoxy-D-xylulose 5-phosphate from D-glyceraldehyde 3-phosphate and pyruvate: step 1/1. In terms of biological role, catalyzes the acyloin condensation reaction between C atoms 2 and 3 of pyruvate and glyceraldehyde 3-phosphate to yield 1-deoxy-D-xylulose-5-phosphate (DXP). This chain is 1-deoxy-D-xylulose-5-phosphate synthase, found in Ralstonia nicotianae (strain ATCC BAA-1114 / GMI1000) (Ralstonia solanacearum).